We begin with the raw amino-acid sequence, 149 residues long: Large ribosomal subunit protein uL22c (149 aa).

Belongs to the universal ribosomal protein uL22 family. Part of the 50S ribosomal subunit.

It is found in the plastid. It localises to the chloroplast. Functionally, this protein binds specifically to 23S rRNA. The globular domain of the protein is located near the polypeptide exit tunnel on the outside of the subunit, while an extended beta-hairpin is found that lines the wall of the exit tunnel in the center of the 70S ribosome. This chain is Large ribosomal subunit protein uL22c (rpl22), found in Oryza nivara (Indian wild rice).